Reading from the N-terminus, the 313-residue chain is Beta-lactamase BRO-1 (313 aa).

The N-terminal stretch at methionine 1–glycine 25 is a signal peptide. A lipid anchor (N-palmitoyl cysteine) is attached at cysteine 26. Cysteine 26 is lipidated: S-diacylglycerol cysteine. Serine 90 functions as the Acyl-ester intermediate in the catalytic mechanism. Lysine 255–glycine 257 is a binding site for substrate.

It belongs to the class-A beta-lactamase family.

It localises to the cell membrane. The catalysed reaction is a beta-lactam + H2O = a substituted beta-amino acid. This Moraxella catarrhalis (Branhamella catarrhalis) protein is Beta-lactamase BRO-1 (bla).